The following is a 475-amino-acid chain: Aspartyl/glutamyl-tRNA(Asn/Gln) amidotransferase subunit B (475 aa).

This sequence belongs to the GatB/GatE family. GatB subfamily. Heterotrimer of A, B and C subunits.

It catalyses the reaction L-glutamyl-tRNA(Gln) + L-glutamine + ATP + H2O = L-glutaminyl-tRNA(Gln) + L-glutamate + ADP + phosphate + H(+). The catalysed reaction is L-aspartyl-tRNA(Asn) + L-glutamine + ATP + H2O = L-asparaginyl-tRNA(Asn) + L-glutamate + ADP + phosphate + 2 H(+). Allows the formation of correctly charged Asn-tRNA(Asn) or Gln-tRNA(Gln) through the transamidation of misacylated Asp-tRNA(Asn) or Glu-tRNA(Gln) in organisms which lack either or both of asparaginyl-tRNA or glutaminyl-tRNA synthetases. The reaction takes place in the presence of glutamine and ATP through an activated phospho-Asp-tRNA(Asn) or phospho-Glu-tRNA(Gln). The protein is Aspartyl/glutamyl-tRNA(Asn/Gln) amidotransferase subunit B of Thermoanaerobacter pseudethanolicus (strain ATCC 33223 / 39E) (Clostridium thermohydrosulfuricum).